A 250-amino-acid polypeptide reads, in one-letter code: Pyrroloquinoline-quinone synthase (250 aa).

It belongs to the PqqC family.

The catalysed reaction is 6-(2-amino-2-carboxyethyl)-7,8-dioxo-1,2,3,4,7,8-hexahydroquinoline-2,4-dicarboxylate + 3 O2 = pyrroloquinoline quinone + 2 H2O2 + 2 H2O + H(+). The protein operates within cofactor biosynthesis; pyrroloquinoline quinone biosynthesis. Ring cyclization and eight-electron oxidation of 3a-(2-amino-2-carboxyethyl)-4,5-dioxo-4,5,6,7,8,9-hexahydroquinoline-7,9-dicarboxylic-acid to PQQ. In Ectopseudomonas mendocina (strain ymp) (Pseudomonas mendocina), this protein is Pyrroloquinoline-quinone synthase.